A 282-amino-acid chain; its full sequence is Deoxyribonuclease-1 (282 aa).

The first 20 residues, 1 to 20 (MARLVLELLAAALLLRVAAT), serve as a signal peptide directing secretion. An N-linked (GlcNAc...) asparagine glycan is attached at N38. Residue E98 is part of the active site. A disulfide bridge connects residues C121 and C124. H154 is a catalytic residue. Cysteines 193 and 229 form a disulfide.

This sequence belongs to the DNase I family. It depends on Ca(2+) as a cofactor. Requires Mg(2+) as cofactor. In terms of processing, N-glycosylated.

The protein localises to the secreted. The protein resides in the zymogen granule. It is found in the nucleus envelope. The enzyme catalyses Endonucleolytic cleavage to 5'-phosphodinucleotide and 5'-phosphooligonucleotide end-products.. Serum endocuclease secreted into body fluids by a wide variety of exocrine and endocrine organs. Expressed by non-hematopoietic tissues and preferentially cleaves protein-free DNA. Among other functions, seems to be involved in cell death by apoptosis. Binds specifically to G-actin and blocks actin polymerization. The chain is Deoxyribonuclease-1 (DNASE1) from Gallus gallus (Chicken).